A 224-amino-acid chain; its full sequence is IAP-like protein p27 (224 aa).

The BIR repeat unit spans residues 29–92; that stretch reads VDARNQSFAI…GFWSRNCGFM (64 aa). 4 residues coordinate Zn(2+): cysteine 62, cysteine 65, histidine 82, and cysteine 89.

Its function is as follows. Not essential for growth or virulence. Does not have antiapoptotic function. The polypeptide is IAP-like protein p27 (p27) (Ornithodoros (relapsing fever ticks)).